The following is a 295-amino-acid chain: uncharacterized protein (295 aa).

NAD(+)-binding positions include 11 to 25 (GYIG…MAKR) and T101. K176 is a catalytic residue. K252 provides a ligand contact to NAD(+).

Belongs to the HIBADH-related family.

This is an uncharacterized protein from Mycobacterium tuberculosis (strain CDC 1551 / Oshkosh).